Consider the following 602-residue polypeptide: 4-hydroxy-3-methylbut-2-en-1-yl diphosphate synthase (flavodoxin) (602 aa).

[4Fe-4S] cluster is bound by residues cysteine 508, cysteine 511, cysteine 543, and glutamate 550.

Belongs to the IspG family. [4Fe-4S] cluster is required as a cofactor.

The enzyme catalyses (2E)-4-hydroxy-3-methylbut-2-enyl diphosphate + oxidized [flavodoxin] + H2O + 2 H(+) = 2-C-methyl-D-erythritol 2,4-cyclic diphosphate + reduced [flavodoxin]. The protein operates within isoprenoid biosynthesis; isopentenyl diphosphate biosynthesis via DXP pathway; isopentenyl diphosphate from 1-deoxy-D-xylulose 5-phosphate: step 5/6. Converts 2C-methyl-D-erythritol 2,4-cyclodiphosphate (ME-2,4cPP) into 1-hydroxy-2-methyl-2-(E)-butenyl 4-diphosphate. This is 4-hydroxy-3-methylbut-2-en-1-yl diphosphate synthase (flavodoxin) from Chlamydia trachomatis serovar D (strain ATCC VR-885 / DSM 19411 / UW-3/Cx).